A 665-amino-acid polypeptide reads, in one-letter code: Coiled-coil domain-containing protein 138 (665 aa).

Residue threonine 48 is modified to Phosphothreonine. Residue serine 49 is modified to Phosphoserine. Residues 198–323 (QQKFAEELQK…YEFMTIQRLK (126 aa)) are a coiled coil. Serine 469 is subject to Phosphoserine.

This is Coiled-coil domain-containing protein 138 (CCDC138) from Macaca fascicularis (Crab-eating macaque).